The following is a 385-amino-acid chain: Zinc cluster transcription factor CZF1 (385 aa).

The span at 1–19 shows a compositional bias: polar residues; that stretch reads MSSIPNINWNDPNNGKSNT. Disordered regions lie at residues 1 to 117, 154 to 216, and 233 to 308; these read MSSI…QQPL, LQQR…QQWD, and SSIQ…KPIT. The span at 20–38 shows a compositional bias: low complexity; that stretch reads SRQSQPQPQLPSNVSPPNS. Polar residues-rich tracts occupy residues 52–67 and 88–97; these read YGSS…NPNT and YPVQQTAQQR. Composition is skewed to low complexity over residues 102–117 and 154–169; these read LQQV…QQPL and LQQR…KSQL. Positions 170–200 are enriched in polar residues; sequence NEQNAMMSASTQQYPVQDFTNPYPNAQNPAE. 2 stretches are compositionally biased toward low complexity: residues 201 to 214 and 233 to 256; these read QQQQ…QSQQ and SSIQ…KQQQ. A compositionally biased stretch (basic residues) spans 265–275; it reads KKKPGRKPKLR. The span at 279–291 shows a compositional bias: polar residues; that stretch reads ESSSETPQVPKTA. The segment at residues 315–342 is a DNA-binding region (zn(2)-C6 fungal-type); that stretch reads CLTCRQRKKRCCETRPRCTECTRLRLNC. Residues 345-364 form a disordered region; the sequence is PKPGTEHKNKPKDQKDDENT. The segment covering 348–364 has biased composition (basic and acidic residues); sequence GTEHKNKPKDQKDDENT.

In terms of assembly, interacts with EFG1.

It localises to the nucleus. Its function is as follows. Transcriptional regulator of the switch between 2 heritable states, the white and opaque states. These 2 cell types differ in many characteristics, including cell structure, mating competence, and virulence. Each state is heritable for many generations, and switching between states occurs stochastically, at low frequency. Contributes to formation of the opaque state, but is not necessary for heritability of the opaque state. Plays a role in cell adhesion and pseudohyphal growth. Involved in acquisition of drug resistance and acts as a repressor of beta-glucan synthesis, thus negatively regulating cell wall integrity. Plays a role in adherence, invasion and damage to oral epithelial cells. The protein is Zinc cluster transcription factor CZF1 (CZF1) of Candida albicans (strain SC5314 / ATCC MYA-2876) (Yeast).